Reading from the N-terminus, the 113-residue chain is Immunoglobulin lambda variable 2-23 (113 aa).

An N-terminal signal peptide occupies residues 1 to 19 (MAWALLLLTLLTQDTGSWA). A Pyrrolidone carboxylic acid modification is found at Gln-20. Positions 20–44 (QSALTQPASVSGSPGQSITISCTGT) are framework-1. Residues 20 to 113 (QSALTQPASV…EADYYCCSYA (94 aa)) form the Ig-like domain. Residues Cys-41 and Cys-109 are joined by a disulfide bond. Residues 45–53 (SSDVGSYNL) are complementarity-determining-1. The segment at 54-70 (VSWYQQHPGKAPKLMIY) is framework-2. A complementarity-determining-2 region spans residues 71-73 (EGS). The segment at 73–92 (SKRPSGVSNRFSGSKSGNTA) is disordered. Positions 74–109 (KRPSGVSNRFSGSKSGNTASLTISGLQAEDEADYYC) are framework-3. The span at 78–92 (GVSNRFSGSKSGNTA) shows a compositional bias: polar residues. Positions 110 to 113 (CSYA) are complementarity-determining-3.

In terms of assembly, immunoglobulins are composed of two identical heavy chains and two identical light chains; disulfide-linked.

It is found in the secreted. The protein localises to the cell membrane. Its function is as follows. V region of the variable domain of immunoglobulin light chains that participates in the antigen recognition. Immunoglobulins, also known as antibodies, are membrane-bound or secreted glycoproteins produced by B lymphocytes. In the recognition phase of humoral immunity, the membrane-bound immunoglobulins serve as receptors which, upon binding of a specific antigen, trigger the clonal expansion and differentiation of B lymphocytes into immunoglobulins-secreting plasma cells. Secreted immunoglobulins mediate the effector phase of humoral immunity, which results in the elimination of bound antigens. The antigen binding site is formed by the variable domain of one heavy chain, together with that of its associated light chain. Thus, each immunoglobulin has two antigen binding sites with remarkable affinity for a particular antigen. The variable domains are assembled by a process called V-(D)-J rearrangement and can then be subjected to somatic hypermutations which, after exposure to antigen and selection, allow affinity maturation for a particular antigen. This Homo sapiens (Human) protein is Immunoglobulin lambda variable 2-23.